Consider the following 887-residue polypeptide: Kinesin-like protein KIF20A (887 aa).

N-acetylserine is present on serine 2. Residues serine 7, serine 14, and serine 21 each carry the phosphoserine modification. The 444-residue stretch at 63–506 (KVKVYLRIRP…AKFSALASQL (444 aa)) folds into the Kinesin motor domain. 159-166 (GVTNSGKT) is a binding site for ATP. Serine 527 is subject to Phosphoserine; by PLK1. Residues 527–553 (SPQVGPGLEKEDKADSDLEDSPEDEAD) form a disordered region. Residues 543–553 (DLEDSPEDEAD) show a composition bias toward acidic residues. A coiled-coil region spans residues 559–804 (KEELLQVVEA…VLVKLDLQKK (246 aa)). Phosphoserine is present on residues serine 683 and serine 823. The tract at residues 805–887 (AACIAEQYHT…LLKSPFGKKY (83 aa)) is globular. Residues 826-875 (KRLGANQENQQPNHQPPGKKPFLRNLLPRTPTCQSSTDSSPYARILRSRH) form a disordered region. Threonine 855 carries the phosphothreonine modification. Polar residues predominate over residues 856–865 (PTCQSSTDSS). A phosphoserine mark is found at serine 865, serine 876, and serine 881.

This sequence belongs to the TRAFAC class myosin-kinesin ATPase superfamily. Kinesin family. Phosphorylated by PLK1 at Ser-527 during mitosis, creating a docking site for PLK1 and recruiting PLK1 at central spindle. In terms of tissue distribution, ubiquitously expressed, with highest levels in spleen and testis.

It localises to the golgi apparatus. It is found in the cytoplasm. The protein localises to the cytoskeleton. Its subcellular location is the spindle. Mitotic kinesin required for chromosome passenger complex (CPC)-mediated cytokinesis. Following phosphorylation by PLK1, involved in recruitment of PLK1 to the central spindle. Interacts with guanosine triphosphate (GTP)-bound forms of RAB6A and RAB6B. May act as a motor required for the retrograde RAB6 regulated transport of Golgi membranes and associated vesicles along microtubules. Has a microtubule plus end-directed motility. The protein is Kinesin-like protein KIF20A (Kif20a) of Mus musculus (Mouse).